Consider the following 348-residue polypeptide: tRNA-specific 2-thiouridylase MnmA (348 aa).

ATP contacts are provided by residues 8-15 and Met-34; that span reads LLSGGVDS. Catalysis depends on Cys-105, which acts as the Nucleophile. A disulfide bond links Cys-105 and Cys-197. Gly-129 contributes to the ATP binding site. Positions 147–149 are interaction with tRNA; the sequence is KDQ. The active-site Cysteine persulfide intermediate is Cys-197.

It belongs to the MnmA/TRMU family.

Its subcellular location is the cytoplasm. It carries out the reaction S-sulfanyl-L-cysteinyl-[protein] + uridine(34) in tRNA + AH2 + ATP = 2-thiouridine(34) in tRNA + L-cysteinyl-[protein] + A + AMP + diphosphate + H(+). In terms of biological role, catalyzes the 2-thiolation of uridine at the wobble position (U34) of tRNA, leading to the formation of s(2)U34. The sequence is that of tRNA-specific 2-thiouridylase MnmA from Fervidobacterium nodosum (strain ATCC 35602 / DSM 5306 / Rt17-B1).